A 120-amino-acid chain; its full sequence is Movement protein TGB2 (120 aa).

Topologically, residues 1 to 16 are cytoplasmic; sequence MSSTSEPTYQLAPPDS. The chain crosses the membrane as a helical span at residues 17–37; that stretch reads LKQVYLTLAAGFAVGLGIFLL. At 38–76 the chain is on the lumenal side; it reads RTNTLPHTGDNIHHLPHGGCYRDGTKSIRYNSPGVATSS. The chain crosses the membrane as a helical span at residues 77–97; sequence NIFLPAVAVLCILALLHVPFF. Residues 98-120 are Cytoplasmic-facing; sequence QPDRVRRRCCRFYWCADPHHPTV.

The protein belongs to the Tymovirales TGBp2 protein family.

The protein resides in the host endoplasmic reticulum membrane. Functionally, plays a role in viral cell-to-cell propagation, by facilitating genome transport to neighboring plant cells through plasmosdesmata,. This Lolium latent virus (isolate Lolium/USA/US1/-) (LoLV) protein is Movement protein TGB2 (ORF3).